The following is a 78-amino-acid chain: Cytochrome b-c1 complex subunit 10, mitochondrial (78 aa).

At 1–26 (MVSYVKGPAYKALSHFGKLNAPLVRS) the chain is on the mitochondrial matrix side. A helical transmembrane segment spans residues 27 to 46 (YIPNLVFWGAAAGGAVATFT). Topologically, residues 47 to 78 (EGVPLFQKTFYEKIPFFGQHWIYNPDPEDVPV) are mitochondrial intermembrane.

It belongs to the UQCR11/QCR10 family. In terms of assembly, component of the ubiquinol-cytochrome c oxidoreductase (cytochrome b-c1 complex, complex III, CIII), a multisubunit enzyme composed of 10 subunits. The complex is composed of 3 respiratory subunits cytochrome b (COB), cytochrome c1 (CYT1) and Rieske protein (RIP1), 2 core protein subunits COR1 and QCR2, and 5 low-molecular weight protein subunits QCR6, QCR7, QCR8, QCR9 and QCR10. The complex exists as an obligatory dimer and forms supercomplexes (SCs) in the inner mitochondrial membrane with a monomer or a dimer of cytochrome c oxidase (complex IV, CIV), resulting in 2 different assemblies (supercomplexes III(2)IV and III(2)IV(2)).

The protein resides in the mitochondrion inner membrane. In terms of biological role, component of the ubiquinol-cytochrome c oxidoreductase, a multisubunit transmembrane complex that is part of the mitochondrial electron transport chain which drives oxidative phosphorylation. The complex plays an important role in the uptake of multiple carbon sources present in different host niches. This Candida albicans (strain SC5314 / ATCC MYA-2876) (Yeast) protein is Cytochrome b-c1 complex subunit 10, mitochondrial.